Reading from the N-terminus, the 189-residue chain is Elongation factor P (189 aa).

Belongs to the elongation factor P family.

The protein localises to the cytoplasm. The protein operates within protein biosynthesis; polypeptide chain elongation. Its function is as follows. Involved in peptide bond synthesis. Stimulates efficient translation and peptide-bond synthesis on native or reconstituted 70S ribosomes in vitro. Probably functions indirectly by altering the affinity of the ribosome for aminoacyl-tRNA, thus increasing their reactivity as acceptors for peptidyl transferase. This Campylobacter fetus subsp. fetus (strain 82-40) protein is Elongation factor P.